The primary structure comprises 633 residues: Heterogeneous nuclear ribonucleoprotein R (633 aa).

Residues 1 to 24 are disordered; the sequence is MANQVNGNAVQLKEEEEPMDTSSV. An N-acetylalanine modification is found at alanine 2. Residues lysine 13 and lysine 171 each participate in a glycyl lysine isopeptide (Lys-Gly) (interchain with G-Cter in SUMO2) cross-link. RRM domains are found at residues 165 to 244, 246 to 328, and 341 to 411; these read TEVF…ISVA, NRLF…WADP, and KVLF…LAKP. Lysine 359 participates in a covalent cross-link: Glycyl lysine isopeptide (Lys-Gly) (interchain with G-Cter in SUMO2). Lysine 366 is subject to N6-acetyllysine. Residues 412–418 carry the Nuclear localization signal motif; sequence PDKKRKE. Residues 412–456 form a disordered region; the sequence is PDKKRKERQAARQASRSTAYEDYYYHPPPRMPPPIRGRGRGGGRG. Positions 437–446 are enriched in pro residues; the sequence is HPPPRMPPPI. Residues 447-567 are RNA-binding RGG-box; that stretch reads RGRGRGGGRG…SRGSRGNRGG (121 aa). Residues 462–471 form a 1; approximate repeat; sequence PDYYGYEDYY. The 3 X 11 AA approximate repeats of D-D-Y-Y-G-Y-D-Y-H-D-Y stretch occupies residues 462 to 497; it reads PDYYGYEDYYDDYYGYDYHDYRGGYEDPYYGYDDGY. Repeat 2 spans residues 472–482; that stretch reads DDYYGYDYHDY. The 3; approximate repeat unit spans residues 488–497; sequence DPYYGYDDGY. Residues 501–510 show a composition bias toward gly residues; the sequence is GRGGGRGGRG. Residues 501 to 633 form a disordered region; the sequence is GRGGGRGGRG…YQDTYGQQWK (133 aa). Pro residues predominate over residues 511-524; sequence APPPPRGRGAPPPR. Over residues 525-541 the composition is skewed to low complexity; that stretch reads GRAGYSQRGAPLGPPRG. Over residues 558–570 the composition is skewed to gly residues; sequence SRGSRGNRGGNVG. Positions 588-604 are enriched in polar residues; the sequence is TNNQQNWGSQPIAQQPL. Positions 605-621 are enriched in low complexity; the sequence is QQGGDYSGNYGYNNDNQ. Residues 622 to 633 show a composition bias toward polar residues; the sequence is EFYQDTYGQQWK.

Identified in the spliceosome C complex. Identified in a IGF2BP1-dependent mRNP granule complex containing untranslated mRNAs. Interacts with GTPBP1.

It localises to the nucleus. The protein localises to the microsome. It is found in the nucleoplasm. The protein resides in the cytoplasm. Functionally, component of ribonucleosomes, which are complexes of at least 20 other different heterogeneous nuclear ribonucleoproteins (hnRNP). hnRNP play an important role in processing of precursor mRNA in the nucleus. The sequence is that of Heterogeneous nuclear ribonucleoprotein R (HNRNPR) from Homo sapiens (Human).